The sequence spans 180 residues: Nudix hydrolase 16, mitochondrial (180 aa).

One can recognise a Nudix hydrolase domain in the interval 18 to 162 (GSRLVAGCIP…WMKDALVEGF (145 aa)). F60 contacts substrate. Residues G63, E78, E82, and E144 each coordinate Mn(2+). Residues 63–84 (GGWENDETVREAAAREAVEEAG) carry the Nudix box motif.

The protein belongs to the Nudix hydrolase family. The cofactor is Mg(2+). Mn(2+) is required as a cofactor. As to expression, expressed in roots, leaves, stems and inflorescences.

It localises to the mitochondrion. Probably mediates the hydrolysis of some nucleoside diphosphate derivatives. The protein is Nudix hydrolase 16, mitochondrial (NUDT16) of Arabidopsis thaliana (Mouse-ear cress).